The primary structure comprises 170 residues: Cathelicidin antimicrobial peptide (170 aa).

Positions 1–30 (MKTQMDGHSLGRWSLVLLLLGLVMPLAIVA) are cleaved as a signal peptide. The propeptide at 31–131 (QVLSYKEAVL…DISCDKDNRR (101 aa)) is cathelin-like domain (CLD). Cystine bridges form between Cys-86/Cys-97 and Cys-108/Cys-125. An active core region spans residues 150–162 (FKRIVQRIKDFLR).

This sequence belongs to the cathelicidin family. Monomer, homodimer or homotrimer (in vitro). Oligomerizes as tetra- or hexamer in solution (in vitro). Proteolytically cleaved by proteinase PRTN3 into antibacterial peptide LL-37. Proteolytically cleaved by cathepsin CTSG and neutrophil elastase ELANE. In terms of processing, resistant to proteolytic degradation in solution, and when bound to both zwitterionic (mimicking mammalian membranes) and negatively charged membranes (mimicking bacterial membranes). Post-translationally, after secretion onto the skin surface, the CAMP gene product is processed by a serine protease-dependent mechanism into multiple novel antimicrobial peptides distinct from and shorter than cathelicidin LL-37. These peptides show enhanced antimicrobial action, acquiring the ability to kill skin pathogens such as S.aureus, E.coli and C.albicans. These peptides have lost the ability to stimulate CXCL8/IL8 release from keratinocytes. The peptides act synergistically, killing bacteria at lower concentrations when present together, and maintain activity at increased salt condition.

Its subcellular location is the secreted. It is found in the vesicle. Antimicrobial protein that is an integral component of the innate immune system. Binds to bacterial lipopolysaccharides (LPS). Acts via neutrophil N-formyl peptide receptors to enhance the release of CXCL2. Postsecretory processing generates multiple cathelicidin antimicrobial peptides with various lengths which act as a topical antimicrobial defense in sweat on skin. The unprocessed precursor form, cathelicidin antimicrobial peptide, inhibits the growth of Gram-negative E.coli and E.aerogenes with efficiencies comparable to that of the mature peptide LL-37 (in vitro). Functionally, antimicrobial peptide that is an integral component of the innate immune system. Binds to bacterial lipopolysaccharides (LPS). Causes membrane permeabilization by forming transmembrane pores (in vitro). Causes lysis of E.coli. Exhibits antimicrobial activity against Gram-negative bacteria such as P.aeruginosa, S.typhimurium, E.aerogenes, E.coli and P.syringae, Gram-positive bacteria such as L.monocytogenes, S.epidermidis, S.pyogenes and S.aureus, as well as vancomycin-resistant enterococci (in vitro). Exhibits antimicrobial activity against methicillin-resistant S.aureus, P.mirabilis, and C.albicans in low-salt media, but not in media containing 100 mM NaCl (in vitro). Forms chiral supramolecular assemblies with quinolone signal (PQS) molecules of P.aeruginosa, which may lead to interference of bacterial quorum signaling and perturbance of bacterial biofilm formation. May form supramolecular fiber-like assemblies on bacterial membranes. Induces cytokine and chemokine producation as well as TNF/TNFA and CSF2/GMCSF production in normal human keratinocytes. Exhibits hemolytic activity against red blood cells. Its function is as follows. Exhibits antimicrobial activity against E.coli and B.megaterium (in vitro). This chain is Cathelicidin antimicrobial peptide, found in Pongo pygmaeus (Bornean orangutan).